The primary structure comprises 149 residues: Large ribosomal subunit protein bL9 (149 aa).

Belongs to the bacterial ribosomal protein bL9 family.

In terms of biological role, binds to the 23S rRNA. The sequence is that of Large ribosomal subunit protein bL9 from Legionella pneumophila subsp. pneumophila (strain Philadelphia 1 / ATCC 33152 / DSM 7513).